Reading from the N-terminus, the 79-residue chain is Small ribosomal subunit protein bS18 (79 aa).

The protein belongs to the bacterial ribosomal protein bS18 family. As to quaternary structure, part of the 30S ribosomal subunit. Forms a tight heterodimer with protein bS6.

Binds as a heterodimer with protein bS6 to the central domain of the 16S rRNA, where it helps stabilize the platform of the 30S subunit. The polypeptide is Small ribosomal subunit protein bS18 (Salinispora arenicola (strain CNS-205)).